Consider the following 284-residue polypeptide: Kynurenine formamidase avaC (284 aa).

The HGGXW motif lies at 47-51 (HGGGW). Ser130 functions as the Nucleophile in the catalytic mechanism.

It belongs to the kynurenine formamidase family.

The catalysed reaction is N-formyl-L-kynurenine + H2O = L-kynurenine + formate + H(+). Its pathway is secondary metabolite metabolism. Its function is as follows. Kynurenine formamidase; part of the cluster that mediates the biosynthesis of a highly modified cyclo-arginine-tryptophan dipeptide (cRW). Within the pathway, avaC catalyzes the deformylation of the cyclo-Arg-formylkynurenine iketopiperazine (DKP), produced by the FAD-dependent monooxygenase avaB. The first step of the pathway is perfornmed by the arginine-containing cyclodipeptide synthase (RCPDS) avaA that acts as the scaffold-generating enzyme and is responsible for formation of the cyclo-Arg-Trp (cRW) diketopiperazine. AvaB then acts as a multifunctional flavoenzyme that is responsible for generating the cyclo-Arg-formylkynurenine DKP, which can be deformylated by avaC. AvaB then further catalyzes an additional N-oxidation followed by cyclization and dehydration. The next step is an N-acetylation of the guanidine group catalyzed by the arginine N-acetyltransferase avaD. The roles of the additional enzymes identified within the ava cluster still have to be determined. The sequence is that of Kynurenine formamidase avaC from Aspergillus versicolor.